Reading from the N-terminus, the 890-residue chain is DNA mismatch repair protein MutS (890 aa).

607–614 (GPNMSGKS) contacts ATP. Residues 832-851 (ESQLSFFGGEQSSKKQDKPL) form a disordered region.

Belongs to the DNA mismatch repair MutS family.

In terms of biological role, this protein is involved in the repair of mismatches in DNA. It is possible that it carries out the mismatch recognition step. This protein has a weak ATPase activity. This Bacillus cereus (strain B4264) protein is DNA mismatch repair protein MutS.